A 487-amino-acid chain; its full sequence is MVTSLYRNGNGRLNSYTQDTANLGVVNQLCPLPKTPLFGTDGIRGKVGELLNASLALDLGFCAAQVLKATMPTPGPIIIGQDSRNSSDMLTTAITAGLTSAGVEVWQIGLCPTPCVAYLARNTEAMGGIMISASHNPPEDNGIKFFDHQGLKLSKGLAQQVEDLLRNTLESNSQRESSLSWGKYYHRRELIEQYLQQLSLSIPTDVNLEGMRIVLDLAWGAAVEIAPQVFKSLGAEVICLHDQPDGDRINVNCGSTHLNLLQQAVKEFGADLGVAFDGDADRVLAVDSEGRVVDGDYILYFWGQTLKAQDKLPNNLIIATVMANLGFEKAWQNLGGQLIRTAVGDQHVQAQMWETGAMLGGEQSGHIICHHHGVSGDGIQTALHLAALVRQSGRSLGALVEQSFQPYPQILRNVRVEDRERRCNWKDCNPLQIAIAEAQAAMGDRGRVLVRASGTEPLIRVMVESECAQSANYWTEHLIGVVQKYLA.

Ser134 (phosphoserine intermediate) is an active-site residue. Positions 134, 277, 279, and 281 each coordinate Mg(2+). The residue at position 134 (Ser134) is a Phosphoserine.

The protein belongs to the phosphohexose mutase family. Requires Mg(2+) as cofactor. In terms of processing, activated by phosphorylation.

The enzyme catalyses alpha-D-glucosamine 1-phosphate = D-glucosamine 6-phosphate. In terms of biological role, catalyzes the conversion of glucosamine-6-phosphate to glucosamine-1-phosphate. The sequence is that of Phosphoglucosamine mutase from Gloeothece citriformis (strain PCC 7424) (Cyanothece sp. (strain PCC 7424)).